The following is a 429-amino-acid chain: Serine--tRNA ligase (429 aa).

229 to 231 is an L-serine binding site; that stretch reads TAE. Residue 260–262 coordinates ATP; it reads RSE. Glutamate 283 contacts L-serine. 347–350 serves as a coordination point for ATP; it reads EISS. Serine 383 is a binding site for L-serine.

Belongs to the class-II aminoacyl-tRNA synthetase family. Type-1 seryl-tRNA synthetase subfamily. As to quaternary structure, homodimer. The tRNA molecule binds across the dimer.

It localises to the cytoplasm. It catalyses the reaction tRNA(Ser) + L-serine + ATP = L-seryl-tRNA(Ser) + AMP + diphosphate + H(+). The catalysed reaction is tRNA(Sec) + L-serine + ATP = L-seryl-tRNA(Sec) + AMP + diphosphate + H(+). Its pathway is aminoacyl-tRNA biosynthesis; selenocysteinyl-tRNA(Sec) biosynthesis; L-seryl-tRNA(Sec) from L-serine and tRNA(Sec): step 1/1. Functionally, catalyzes the attachment of serine to tRNA(Ser). Is also able to aminoacylate tRNA(Sec) with serine, to form the misacylated tRNA L-seryl-tRNA(Sec), which will be further converted into selenocysteinyl-tRNA(Sec). The chain is Serine--tRNA ligase from Orientia tsutsugamushi (strain Ikeda) (Rickettsia tsutsugamushi).